Here is a 150-residue protein sequence, read N- to C-terminus: Clitocypin (150 aa).

The protein belongs to the protease inhibitor I48 family. As to quaternary structure, homodimer. As to expression, uniformly expressed throughout the mature fruiting body (at mRNA and protein level).

Its function is as follows. Binds and inhibits cysteine proteinases. Inhibits most strongly papain and cathepsin L, more weakly bromelain and cathepsin B while it is completely ineffective against cathepsin H. The polypeptide is Clitocypin (Cnc1) (Clitocybe nebularis (Clouded agaric)).